Reading from the N-terminus, the 61-residue chain is Metallothionein-1E (61 aa).

Methionine 1 carries the N-acetylmethionine modification. The beta stretch occupies residues 1–29 (MDPNCSCPTGGSCSCAGSCTCKACRCTSC). Positions 5, 7, 13, 15, 19, 21, 24, 26, 29, 33, 34, 36, 37, 41, 44, 48, 50, 57, 59, and 60 each coordinate a divalent metal cation. The interval 30 to 61 (KKSCCSCCPVGCAKCAQGCICKGASDKCSCCA) is alpha.

It belongs to the metallothionein superfamily. Type 1 family. In terms of assembly, monomer.

Metallothioneins have a high content of cysteine residues that bind various heavy metals; these proteins are transcriptionally regulated by both heavy metals and glucocorticoids. The chain is Metallothionein-1E (MT1E) from Sus scrofa (Pig).